A 1246-amino-acid chain; its full sequence is Myosin-1 (1246 aa).

Residues 1 to 41 (MGHSRRPVGGEKKSRGFGRSKAVADVGDGRQTGGKPQVKKA) are disordered. The Myosin motor domain occupies 51–730 (IGVSDLTLLS…TLFALEAMRD (680 aa)). An ATP-binding site is contributed by 144–151 (GESGAGKT). At Ser372 the chain carries Phosphoserine. Residues 419-501 (SIGILDIYGF…PGVFAALNDA (83 aa)) form an actin-binding region. 2 consecutive IQ domains span residues 734 to 754 (HNMAIRIQRAWRNYLRYRIEC) and 755 to 780 (AIRIQRFWRRMTGGLELIKVRDQGHK). Residues 788 to 976 (RRRMSLLGSR…TIHTSAGEPP (189 aa)) form the TH1 domain. The segment covering 956–970 (GSSNVDTYKSSTIHT) has biased composition (polar residues). Disordered regions lie at residues 956 to 1080 (GSSN…PKKP) and 1127 to 1246 (WTPQ…DDEW). 2 stretches are compositionally biased toward pro residues: residues 1033-1045 (APQPAAVPRPVPQ) and 1065-1078 (APPPPPPVSPPAPK). The SH3 domain occupies 1077–1138 (PKKPMAKVLY…PQAYLEEQKA (62 aa)). Composition is skewed to low complexity over residues 1151–1166 (TPATNGTATAAAAKAK) and 1214–1228 (NSASNASLAGGLAEA). The segment covering 1229–1240 (LRQRQEAMHGKQ) has biased composition (basic and acidic residues).

The protein belongs to the TRAFAC class myosin-kinesin ATPase superfamily. Myosin family. In terms of processing, phosphorylation of the TEDS site (Ser-372) is required for the polarization of the actin cytoskeleton. Phosphorylation probably activates the myosin-I ATPase activity.

The protein resides in the cytoplasm. Its subcellular location is the cytoskeleton. It localises to the actin patch. Its function is as follows. Type-I myosin implicated in the organization of the actin cytoskeleton. Required for proper actin cytoskeleton polarization. At the cell cortex, assembles in patch-like structures together with proteins from the actin-polymerizing machinery and promotes actin assembly. Functions as actin nucleation-promoting factor (NPF) for the Arp2/3 complex. Plays an important role in polarized growth, spore germination, hyphal morphogenesis, and septal wall formation. This chain is Myosin-1 (myoA), found in Aspergillus terreus (strain NIH 2624 / FGSC A1156).